A 393-amino-acid polypeptide reads, in one-letter code: Formate-dependent phosphoribosylglycinamide formyltransferase (393 aa).

N(1)-(5-phospho-beta-D-ribosyl)glycinamide is bound by residues 22-23 (EL) and Glu82. ATP-binding positions include Arg114, Lys155, 160 to 165 (SSGHGQ), 195 to 198 (EGFV), and Glu203. The 190-residue stretch at 119–308 (RLAAEKLKLP…EFALHARAIL (190 aa)) folds into the ATP-grasp domain. Positions 267 and 279 each coordinate Mg(2+). Residues Asp286, Lys356, and 363–364 (RR) contribute to the N(1)-(5-phospho-beta-D-ribosyl)glycinamide site.

It belongs to the PurK/PurT family. Homodimer.

It carries out the reaction N(1)-(5-phospho-beta-D-ribosyl)glycinamide + formate + ATP = N(2)-formyl-N(1)-(5-phospho-beta-D-ribosyl)glycinamide + ADP + phosphate + H(+). It functions in the pathway purine metabolism; IMP biosynthesis via de novo pathway; N(2)-formyl-N(1)-(5-phospho-D-ribosyl)glycinamide from N(1)-(5-phospho-D-ribosyl)glycinamide (formate route): step 1/1. In terms of biological role, involved in the de novo purine biosynthesis. Catalyzes the transfer of formate to 5-phospho-ribosyl-glycinamide (GAR), producing 5-phospho-ribosyl-N-formylglycinamide (FGAR). Formate is provided by PurU via hydrolysis of 10-formyl-tetrahydrofolate. The protein is Formate-dependent phosphoribosylglycinamide formyltransferase of Histophilus somni (strain 129Pt) (Haemophilus somnus).